We begin with the raw amino-acid sequence, 289 residues long: Ribosomal protein L11 methyltransferase (289 aa).

S-adenosyl-L-methionine-binding residues include T142, G163, D185, and N226.

It belongs to the methyltransferase superfamily. PrmA family.

Its subcellular location is the cytoplasm. It carries out the reaction L-lysyl-[protein] + 3 S-adenosyl-L-methionine = N(6),N(6),N(6)-trimethyl-L-lysyl-[protein] + 3 S-adenosyl-L-homocysteine + 3 H(+). Its function is as follows. Methylates ribosomal protein L11. In Legionella pneumophila (strain Paris), this protein is Ribosomal protein L11 methyltransferase.